A 122-amino-acid polypeptide reads, in one-letter code: Large ribosomal subunit protein uL14 (122 aa).

The protein belongs to the universal ribosomal protein uL14 family. In terms of assembly, part of the 50S ribosomal subunit. Forms a cluster with proteins L3 and L19. In the 70S ribosome, L14 and L19 interact and together make contacts with the 16S rRNA in bridges B5 and B8.

Functionally, binds to 23S rRNA. Forms part of two intersubunit bridges in the 70S ribosome. The polypeptide is Large ribosomal subunit protein uL14 (Staphylococcus carnosus (strain TM300)).